Here is a 679-residue protein sequence, read N- to C-terminus: Glycine--tRNA ligase beta subunit (679 aa).

Belongs to the class-II aminoacyl-tRNA synthetase family. Tetramer of two alpha and two beta subunits.

The protein localises to the cytoplasm. The catalysed reaction is tRNA(Gly) + glycine + ATP = glycyl-tRNA(Gly) + AMP + diphosphate. The polypeptide is Glycine--tRNA ligase beta subunit (Streptococcus uberis (strain ATCC BAA-854 / 0140J)).